The primary structure comprises 770 residues: Amyloid-beta precursor protein (770 aa).

Residues 1–17 (MLPSLALLLLAAWTVRA) form the signal peptide. Residues 18 to 701 (LEVPTDGNAG…AEDVGSNKGA (684 aa)) are Extracellular-facing. Residues 28–123 (LLAEPQIAMF…PYRCLVGEFV (96 aa)) form a GFLD subdomain region. Residues 28–189 (LLAEPQIAMF…RGVEFVCCPL (162 aa)) form the E1 domain. 6 disulfide bridges follow: C38–C62, C73–C117, C98–C105, C133–C187, C144–C174, and C158–C186. Residue 96–110 (NWCKRGRKQCKTHTH) participates in heparin binding. The tract at residues 131–189 (DKCKFLHQERMDVCETHLHWHTVAKETCSEKSTNLHDYGMLLPCGIDKFRGVEFVCCPL) is cuBD subdomain. Cu(2+) contacts are provided by H147, H151, and Y168. Residues 181 to 188 (GVEFVCCP) form a zinc-binding region. The Zn(2+) site is built by E183, C186, and C187. The span at 193-207 (SDSVDSADAEEDDSD) shows a compositional bias: acidic residues. A disordered region spans residues 193–284 (SDSVDSADAE…TTTTTTESVE (92 aa)). The residue at position 198 (S198) is a Phosphoserine; by CK2. S206 is modified (phosphoserine; by CK1). A sulfotyrosine mark is found at Y217 and Y262. The span at 228–264 (VAEEEEVADVEEEEADDDEDVEDGDEVEEEAEEPYEE) shows a compositional bias: acidic residues. Residues 268 to 281 (RTTSTATTTTTTTE) are compositionally biased toward low complexity. 3 disulfide bridges follow: C291–C341, C300–C324, and C316–C337. The region spanning 291-341 (CSEQAETGPCRAMISRWYFDVTEGKCVPFFYGGCGGNRNNFDTEEYCMAVC) is the BPTI/Kunitz inhibitor domain. Sulfotyrosine is present on Y336. The OX-2 motif lies at 344 to 365 (VSTQSLLKTTSEPLPQDPDKLP). An E2 domain is found at 374-565 (AVDKYLETPG…EEIQDEVDEL (192 aa)). Residues 391–423 (FQKAKERLEAKHRERMSQVMREWEEAERQAKNL) form a heparin-binding region. S441 is modified (phosphoserine). The interval 491 to 522 (FNMLKKYVRAEQKDRQHTLKHFEHVRMVDPKK) is heparin-binding. At Y497 the chain carries Phosphotyrosine. Positions 523–540 (AAQIRSQVMTHLRVIYER) are collagen-binding. 2 N-linked (GlcNAc...) asparagine glycosylation sites follow: N542 and N571. The Cu(2+) site is built by H677 and H685. Residues H677 and H685 each contribute to the Zn(2+) site. The interaction with PSEN1 stretch occupies residues 695–722 (VGSNKGAIIGLMVGGVVIATVIVITLVM). The chain crosses the membrane as a helical span at residues 702–722 (IIGLMVGGVVIATVIVITLVM). At 723-770 (LKKKQYTSIHHGVVEVDAAVTPEERHLSKMQQNGYENPTYKFFEQMQN) the chain is on the cytoplasmic side. The Basolateral sorting signal motif lies at 724-734 (KKKQYTSIHHG). Phosphothreonine is present on T729. S730 carries the phosphoserine; by APP-kinase I modification. Residues 732–751 (HHGVVEVDAAVTPEERHLSK) form an interaction with G(o)-alpha region. T743 is modified (phosphothreonine; by CDK5 and MAPK10 and LRRK2). Residues 756–770 (GYENPTYKFFEQMQN) form an interaction with DAB2 region. The required for the interaction with KIF5B and for anterograde transport in axons stretch occupies residues 756 to 770 (GYENPTYKFFEQMQN). Y757 carries the post-translational modification Phosphotyrosine; by ABL1. A YENPXY motif; contains endocytosis signal motif is present at residues 757-762 (YENPTY). K763 is covalently cross-linked (Glycyl lysine isopeptide (Lys-Gly) (interchain with G-Cter in ubiquitin)).

The protein belongs to the APP family. Binds, via its C-terminus, to the PID domain of several cytoplasmic proteins, including APBB family members, the APBA family, MAPK8IP1, SHC1, NUMB and DAB1. Binding to DAB1 inhibits its serine phosphorylation. Interacts (via NPXY motif) with DAB2 (via PID domain); the interaction is impaired by tyrosine phosphorylation of the NPXY motif. Also interacts with GPCR-like protein BPP, APPBP1, IB1, KNS2 (via its TPR domains), APPBP2 (via BaSS) and DDB1. In vitro, it binds MAPT via the MT-binding domains. Associates with microtubules in the presence of ATP and in a kinesin-dependent manner. Interacts, through a C-terminal domain, with GNAO1. Amyloid-beta protein 42 binds CHRNA7 in hippocampal neurons. Amyloid-beta associates with HADH2. Interacts with ANKS1B and AGER. Interacts with CPEB1. Interacts with ITM2B. Interacts with ITM2C. Interacts with IDE. Can form homodimers; dimerization is enhanced in the presence of Cu(2+) ions. Can form homodimers; this is promoted by heparin binding. Amyloid-beta protein 40 interacts with S100A9. CTF-alpha product of APP interacts with GSAP. Isoform APP695 interacts with SORL1 (via N-terminal ectodomain); this interaction retains APP in the trans-Golgi network and reduces processing into soluble APP-alpha and amyloid-beta peptides. The C99 fragment also interacts with SORL1. Isoform APP751 interacts with SORL1. Isoform APP770 interacts with SORL1. Interacts with PLD3. Interacts with VDAC1. Interacts with NSG1; could regulate APP processing. Amyloid-beta protein 42 interacts with FPR2. Interacts with SYT7. Interacts (via transmembrane region) with PSEN1; the interaction is direct. Interacts with LRRK2. Interacts (via cytoplasmic domain) with KIF5B. Interacts (via C-terminus) with APBB2/FE65L1 (via C-terminus). Interacts (via intracellular domain) with APBB3. In terms of processing, proteolytically processed under normal cellular conditions. Cleavage either by alpha-secretase, beta-secretase or theta-secretase leads to generation and extracellular release of soluble APP peptides, S-APP-alpha and S-APP-beta, and the retention of corresponding membrane-anchored C-terminal fragments, C80, C83 and C99. Subsequent processing of C80 and C83 by gamma-secretase yields P3 peptides. This is the major secretory pathway and is non-amyloidogenic. Alternatively, presenilin/nicastrin-mediated gamma-secretase processing of C99 releases the amyloid-beta proteins, amyloid-beta protein 40 and amyloid-beta protein 42, major components of amyloid plaques, and the cytotoxic C-terminal fragments, gamma-CTF(50), gamma-CTF(57) and gamma-CTF(59). PSEN1 cleavage is more efficient with C83 than with C99 as substrate (in vitro). Amyloid-beta protein 40 and Amyloid-beta protein 42 are cleaved by ACE. Many other minor amyloid-beta peptides, amyloid-beta 1-X peptides, are found in cerebral spinal fluid (CSF) including the amyloid-beta X-15 peptides, produced from the cleavage by alpha-secretase. Proteolytically cleaved by caspases during neuronal apoptosis. Cleavage at Asp-739 by either CASP6, CASP8 or CASP9 results in the production of the neurotoxic C31 peptide and the increased production of amyloid-beta peptides. Post-translationally, N- and O-glycosylated. In terms of processing, phosphorylation in the C-terminal on tyrosine, threonine and serine residues is neuron-specific. Phosphorylation can affect APP processing, neuronal differentiation and interaction with other proteins. Phosphorylated on Thr-743 in neuronal cells by Cdc5 kinase and Mapk10, in dividing cells by Cdc2 kinase in a cell-cycle dependent manner with maximal levels at the G2/M phase and, in vitro, by GSK-3-beta. The Thr-743 phosphorylated form causes a conformational change which reduces binding of Fe65 family members. In dopaminergic (DA) neurons, phosphorylation on Thr-743 by LRKK2 promotes the production and the nuclear translocation of the APP intracellular domain (AICD) which induces DA neuron apoptosis. Phosphorylation on Tyr-757 is required for SHC binding. Phosphorylated in the extracellular domain by casein kinases on both soluble and membrane-bound APP. This phosphorylation is inhibited by heparin. Extracellular binding and reduction of copper, results in a corresponding oxidation of Cys-144 and Cys-158, and the formation of a disulfide bond. Post-translationally, trophic-factor deprivation triggers the cleavage of surface APP by beta-secretase to release sAPP-beta which is further cleaved to release an N-terminal fragment of APP (N-APP). In terms of processing, amyloid-beta peptides are degraded by IDE. Sulfated on tyrosine residues. As to expression, expressed in the brain with expression in cortex, cerebellum, hippocampus, olfactory bulb, neurons, astrocytes and microglia (at protein level). Expressed in the retinal lens. Expressed at a low level in muscle cells (at protein level). In terms of tissue distribution, expressed in kidney. Widely expressed. Expressed in several different brain regions including hippocampus, substantia nigra pars compacta and cerebellum. Within the cerebellum, abundantly expressed in Purkinje cells. As to expression, expressed in the brain, kidney and liver. Expressed in several different brain regions including hippocampus, substantia nigra pars compacta and cerebellum. Within the cerebellum, abundantly expressed in Purkinje cells. In terms of tissue distribution, expressed in several different brain regions including hippocampus, substantia nigra pars compacta and cerebellum. Within the cerebellum, abundantly expressed in Purkinje cells.

Its subcellular location is the cell membrane. The protein localises to the membrane. It localises to the perikaryon. The protein resides in the cell projection. It is found in the growth cone. Its subcellular location is the clathrin-coated pit. The protein localises to the early endosome. It localises to the cytoplasmic vesicle. The protein resides in the golgi apparatus. It is found in the trans-Golgi network. Its subcellular location is the endoplasmic reticulum. The protein localises to the secreted. It localises to the cell surface. The protein resides in the nucleus. It is found in the cytoplasm. Its function is as follows. Functions as a cell surface receptor and performs physiological functions on the surface of neurons relevant to neurite growth, neuronal adhesion and axonogenesis. Interaction between APP molecules on neighboring cells promotes synaptogenesis. Involved in cell mobility and transcription regulation through protein-protein interactions. Can promote transcription activation through binding to APBB1-KAT5 and inhibit Notch signaling through interaction with Numb. Couples to apoptosis-inducing pathways such as those mediated by G(o) and JIP. Inhibits G(o)-alpha ATPase activity. Acts as a kinesin I membrane receptor, mediating the axonal transport of beta-secretase and presenilin 1. By acting as a kinesin I membrane receptor, plays a role in axonal anterograde transport of cargo towards synapses in axons. May be involved in copper homeostasis/oxidative stress through copper ion reduction. Can regulate neurite outgrowth through binding to components of the extracellular matrix such as heparin and collagen I and IV. The splice isoforms that contain the BPTI domain possess protease inhibitor activity. Induces a AGER-dependent pathway that involves activation of p38 MAPK, resulting in internalization of amyloid-beta peptide and leading to mitochondrial dysfunction in cultured cortical neurons. Provides Cu(2+) ions for GPC1 which are required for release of nitric oxide (NO) and subsequent degradation of the heparan sulfate chains on GPC1. Functionally, amyloid-beta peptides are lipophilic metal chelators with metal-reducing activity. Binds transient metals such as copper, zinc and iron. Rat and mouse amyloid-beta peptides bind only weakly transient metals and have little reducing activity due to substitutions of transient metal chelating residues. Amyloid-beta protein 42 may activate mononuclear phagocytes in the brain and elicit inflammatory responses. Promotes both tau aggregation and TPK II-mediated phosphorylation. Also binds GPC1 in lipid rafts. The gamma-CTF peptides as well as the caspase-cleaved peptides, including C31, are potent enhancers of neuronal apoptosis. This is Amyloid-beta precursor protein from Mus musculus (Mouse).